The chain runs to 596 residues: Interleukin-1 receptor-associated kinase 3 (596 aa).

Residues Trp-41 to Gly-106 form the Death domain. Position 110 is a phosphoserine; by IRAK1 (Ser-110). Residues Phe-165 to Phe-452 enclose the Protein kinase domain. Residues Ile-171 to Val-179, Lys-192, Ser-295 to Asn-298, and Asp-311 contribute to the ATP site. Ser-467 is modified (phosphoserine). A disordered region spans residues Asn-560–Glu-596.

The protein belongs to the protein kinase superfamily. TKL Ser/Thr protein kinase family. Pelle subfamily. As to quaternary structure, monomer. Homodimer; disulfide-linked. May interact with IRAK4 (when phosphorylated). Interacts (when phosphorylated at Ser-110) with PIN1 (via WW domain) in response to IL33-mediated (but not TLR4 ligand LPS) dendritic cell stimulation. As to expression, expressed in eosinophils, dendritic cells and/or monocytes (at protein level). Expressed predominantly in peripheral blood lymphocytes.

It is found in the cytoplasm. Its subcellular location is the nucleus. Putative inactive protein kinase which regulates signaling downstream of immune receptors including IL1R and Toll-like receptors. Inhibits dissociation of IRAK1 and IRAK4 from the Toll-like receptor signaling complex by either inhibiting the phosphorylation of IRAK1 and IRAK4 or stabilizing the receptor complex. Upon IL33-induced lung inflammation, positively regulates expression of IL6, CSF3, CXCL2 and CCL5 mRNAs in dendritic cells. The protein is Interleukin-1 receptor-associated kinase 3 of Homo sapiens (Human).